The following is a 382-amino-acid chain: Pyrimidine monooxygenase RutA (382 aa).

FMN is bound by residues 68–69 (IK), asparagine 134, glutamate 143, 159–160 (RY), and serine 209.

It belongs to the NtaA/SnaA/DszA monooxygenase family. RutA subfamily.

It carries out the reaction uracil + FMNH2 + NADH + O2 = (Z)-3-ureidoacrylate + FMN + NAD(+) + H2O + H(+). It catalyses the reaction thymine + FMNH2 + NADH + O2 = (Z)-2-methylureidoacrylate + FMN + NAD(+) + H2O + H(+). Its function is as follows. Catalyzes the pyrimidine ring opening between N-3 and C-4 by an unusual flavin hydroperoxide-catalyzed mechanism, adding oxygen atoms in the process to yield ureidoacrylate peracid, that immediately reacts with FMN forming ureidoacrylate and FMN-N(5)-oxide. The FMN-N(5)-oxide reacts spontaneously with NADH to produce FMN. Requires the flavin reductase RutF to regenerate FMN in vivo. The sequence is that of Pyrimidine monooxygenase RutA from Shigella flexneri serotype X (strain 2002017).